A 247-amino-acid chain; its full sequence is ATP synthase subunit a, chloroplastic (247 aa).

5 helical membrane passes run 36 to 56 (GQVL…SIFG), 95 to 115 (VPFI…GALV), 134 to 154 (INTT…AGFS), 199 to 219 (LVVG…LMLL), and 220 to 240 (GLFT…AYIG).

It belongs to the ATPase A chain family. As to quaternary structure, F-type ATPases have 2 components, CF(1) - the catalytic core - and CF(0) - the membrane proton channel. CF(1) has five subunits: alpha(3), beta(3), gamma(1), delta(1), epsilon(1). CF(0) has four main subunits: a, b, b' and c.

Its subcellular location is the plastid. It localises to the chloroplast thylakoid membrane. Functionally, key component of the proton channel; it plays a direct role in the translocation of protons across the membrane. In Mesostigma viride (Green alga), this protein is ATP synthase subunit a, chloroplastic.